Reading from the N-terminus, the 207-residue chain is Thiamine-phosphate synthase (207 aa).

4-amino-2-methyl-5-(diphosphooxymethyl)pyrimidine-binding positions include 35–39 and N67; that span reads QYRDK. D68 and D86 together coordinate Mg(2+). 4-amino-2-methyl-5-(diphosphooxymethyl)pyrimidine is bound at residue T105. Residue 132 to 134 coordinates 2-[(2R,5Z)-2-carboxy-4-methylthiazol-5(2H)-ylidene]ethyl phosphate; it reads SNT. A 4-amino-2-methyl-5-(diphosphooxymethyl)pyrimidine-binding site is contributed by K135. Residue G162 participates in 2-[(2R,5Z)-2-carboxy-4-methylthiazol-5(2H)-ylidene]ethyl phosphate binding.

The protein belongs to the thiamine-phosphate synthase family. Mg(2+) is required as a cofactor.

It catalyses the reaction 2-[(2R,5Z)-2-carboxy-4-methylthiazol-5(2H)-ylidene]ethyl phosphate + 4-amino-2-methyl-5-(diphosphooxymethyl)pyrimidine + 2 H(+) = thiamine phosphate + CO2 + diphosphate. It carries out the reaction 2-(2-carboxy-4-methylthiazol-5-yl)ethyl phosphate + 4-amino-2-methyl-5-(diphosphooxymethyl)pyrimidine + 2 H(+) = thiamine phosphate + CO2 + diphosphate. The enzyme catalyses 4-methyl-5-(2-phosphooxyethyl)-thiazole + 4-amino-2-methyl-5-(diphosphooxymethyl)pyrimidine + H(+) = thiamine phosphate + diphosphate. The protein operates within cofactor biosynthesis; thiamine diphosphate biosynthesis; thiamine phosphate from 4-amino-2-methyl-5-diphosphomethylpyrimidine and 4-methyl-5-(2-phosphoethyl)-thiazole: step 1/1. In terms of biological role, condenses 4-methyl-5-(beta-hydroxyethyl)thiazole monophosphate (THZ-P) and 2-methyl-4-amino-5-hydroxymethyl pyrimidine pyrophosphate (HMP-PP) to form thiamine monophosphate (TMP). In Pseudomonas fluorescens (strain Pf0-1), this protein is Thiamine-phosphate synthase.